The chain runs to 273 residues: Large ribosomal subunit protein uL2 (273 aa).

The disordered stretch occupies residues 221–273 (RGTAMNPVDHPHGGGEGRNFGKHPVTPWGIQTKGKKTRSNKRTDKFIVRRRSK).

Belongs to the universal ribosomal protein uL2 family. Part of the 50S ribosomal subunit. Forms a bridge to the 30S subunit in the 70S ribosome.

In terms of biological role, one of the primary rRNA binding proteins. Required for association of the 30S and 50S subunits to form the 70S ribosome, for tRNA binding and peptide bond formation. It has been suggested to have peptidyltransferase activity; this is somewhat controversial. Makes several contacts with the 16S rRNA in the 70S ribosome. The polypeptide is Large ribosomal subunit protein uL2 (Sodalis glossinidius (strain morsitans)).